The following is a 312-amino-acid chain: Probable deoxyhypusine synthase (312 aa).

The Nucleophile role is filled by K285.

It belongs to the deoxyhypusine synthase family. Requires NAD(+) as cofactor.

The catalysed reaction is [eIF5A protein]-L-lysine + spermidine = [eIF5A protein]-deoxyhypusine + propane-1,3-diamine. Its pathway is protein modification; eIF5A hypusination. In terms of biological role, catalyzes the NAD-dependent oxidative cleavage of spermidine and the subsequent transfer of the butylamine moiety of spermidine to the epsilon-amino group of a specific lysine residue of the eIF-5A precursor protein to form the intermediate deoxyhypusine residue. The polypeptide is Probable deoxyhypusine synthase (Saccharolobus islandicus (strain M.16.4 / Kamchatka #3) (Sulfolobus islandicus)).